The following is a 107-amino-acid chain: Sperm protamine P1 (107 aa).

Composition is skewed to basic and acidic residues over residues 1-10 (ALRKVDRNRF) and 20-33 (REAKRYKEEEEFPG). Residues 1-35 (ALRKVDRNRFVLDNVTPQPREAKRYKEEEEFPGHG) constitute a propeptide, removed in mature form. The disordered stretch occupies residues 1-107 (ALRKVDRNRF…RRRRRGKKGK (107 aa)). Positions 34–107 (HGRRRRRRSK…RRRRRGKKGK (74 aa)) are enriched in basic residues. Phosphoserine is present on Ser42.

In terms of processing, a series of N-terminal cleavages yield the mature protein. Post-translationally, only the mature protein is phosphorylated. As to expression, gonads.

The protein resides in the nucleus. It is found in the chromosome. Functionally, protamines substitute for histones in the chromatin of sperm during the haploid phase of spermatogenesis. They compact sperm DNA into a highly condensed, stable and inactive complex. The polypeptide is Sperm protamine P1 (Bolinus brandaris (Purple dye murex)).